The sequence spans 67 residues: DNA-directed RNA polymerase subunit omega (67 aa).

The protein belongs to the RNA polymerase subunit omega family. The RNAP catalytic core consists of 2 alpha, 1 beta, 1 beta' and 1 omega subunit. When a sigma factor is associated with the core the holoenzyme is formed, which can initiate transcription.

It catalyses the reaction RNA(n) + a ribonucleoside 5'-triphosphate = RNA(n+1) + diphosphate. Functionally, promotes RNA polymerase assembly. Latches the N- and C-terminal regions of the beta' subunit thereby facilitating its interaction with the beta and alpha subunits. This Dictyoglomus turgidum (strain DSM 6724 / Z-1310) protein is DNA-directed RNA polymerase subunit omega.